The sequence spans 237 residues: Ribose-5-phosphate isomerase A (237 aa).

Residues 33–36 (TGST), 90–93 (DGAD), and 103–106 (KGGG) each bind substrate. The Proton acceptor role is filled by Glu-112. Lys-130 provides a ligand contact to substrate.

It belongs to the ribose 5-phosphate isomerase family. As to quaternary structure, homodimer.

The catalysed reaction is aldehydo-D-ribose 5-phosphate = D-ribulose 5-phosphate. The protein operates within carbohydrate degradation; pentose phosphate pathway; D-ribose 5-phosphate from D-ribulose 5-phosphate (non-oxidative stage): step 1/1. Functionally, catalyzes the reversible conversion of ribose-5-phosphate to ribulose 5-phosphate. This Gloeothece citriformis (strain PCC 7424) (Cyanothece sp. (strain PCC 7424)) protein is Ribose-5-phosphate isomerase A.